A 314-amino-acid chain; its full sequence is DNA-directed RNA polymerase subunit alpha (314 aa).

The interval 1–228 (MAQYTIECVE…DQLRPLQEIT (228 aa)) is alpha N-terminal domain (alpha-NTD). The tract at residues 241 to 314 (NTVGQVPIEE…SLPKDKPARS (74 aa)) is alpha C-terminal domain (alpha-CTD).

This sequence belongs to the RNA polymerase alpha chain family. In cyanobacteria the RNAP catalytic core is composed of 2 alpha, 1 beta, 1 beta', 1 gamma and 1 omega subunit. When a sigma factor is associated with the core the holoenzyme is formed, which can initiate transcription.

The catalysed reaction is RNA(n) + a ribonucleoside 5'-triphosphate = RNA(n+1) + diphosphate. Its function is as follows. DNA-dependent RNA polymerase catalyzes the transcription of DNA into RNA using the four ribonucleoside triphosphates as substrates. This Gloeobacter violaceus (strain ATCC 29082 / PCC 7421) protein is DNA-directed RNA polymerase subunit alpha.